The primary structure comprises 296 residues: 33 kDa chaperonin (296 aa).

2 disulfides stabilise this stretch: cysteine 237–cysteine 239 and cysteine 270–cysteine 273.

The protein belongs to the HSP33 family. Post-translationally, under oxidizing conditions two disulfide bonds are formed involving the reactive cysteines. Under reducing conditions zinc is bound to the reactive cysteines and the protein is inactive.

It is found in the cytoplasm. Redox regulated molecular chaperone. Protects both thermally unfolding and oxidatively damaged proteins from irreversible aggregation. Plays an important role in the bacterial defense system toward oxidative stress. The sequence is that of 33 kDa chaperonin from Acetivibrio thermocellus (strain ATCC 27405 / DSM 1237 / JCM 9322 / NBRC 103400 / NCIMB 10682 / NRRL B-4536 / VPI 7372) (Clostridium thermocellum).